The sequence spans 419 residues: MNIIDELEWRGAIYQQTDEEGLRKWVEEKQISLYCGIDPSGDSMHIGHLIPFMILRRFQNAGHRPIILVGGATGTIGDPSGKKEERKLQSMEQISKNVESLRVQLGKIFDFEGDSAASMVNNYDWTKDVSILDFLRDYGKEFNVNTMLSKDIVASRLEVGISFTEFAYQILQAMDFNHLYEFNDCRLQIGGSDQWGNITAGLDLIRKKQGENAKAFGLTIPLLTKADGTKFGKSEGGAIWLNPEKTTPYEFYQFWINTDDRDVVKYLKYFTFLTEAEIDELAKQVEEEPHLRAAQKTLAAEMTKFVHSEEALEQALKISKALFSGDVTALTADEIEQGFKDVPTFVAEDAEVNLVDWLVTLGIEPSKRQAREDVTNGAIYINGERQQNVEKVIDASDRIENKFTIVRRGKKKYFLVSYK.

Tyr-34 contributes to the L-tyrosine binding site. The 'HIGH' region motif lies at 39 to 48 (PSGDSMHIGH). L-tyrosine-binding residues include Tyr-168 and Gln-172. Residues 230-234 (KFGKS) carry the 'KMSKS' region motif. An ATP-binding site is contributed by Lys-233. The 67-residue stretch at 352 to 418 (VNLVDWLVTL…GKKKYFLVSY (67 aa)) folds into the S4 RNA-binding domain.

This sequence belongs to the class-I aminoacyl-tRNA synthetase family. TyrS type 1 subfamily. In terms of assembly, homodimer.

Its subcellular location is the cytoplasm. The enzyme catalyses tRNA(Tyr) + L-tyrosine + ATP = L-tyrosyl-tRNA(Tyr) + AMP + diphosphate + H(+). In terms of biological role, catalyzes the attachment of tyrosine to tRNA(Tyr) in a two-step reaction: tyrosine is first activated by ATP to form Tyr-AMP and then transferred to the acceptor end of tRNA(Tyr). This chain is Tyrosine--tRNA ligase, found in Listeria innocua serovar 6a (strain ATCC BAA-680 / CLIP 11262).